A 445-amino-acid polypeptide reads, in one-letter code: GTPase Der (445 aa).

2 consecutive EngA-type G domains span residues 3–167 (PVIA…YAGQ) and 180–353 (IKIA…AAAM). GTP is bound by residues 9-16 (GRPNVGKS), 56-60 (DTGGF), 119-122 (NKAE), 186-193 (GRPNVGKS), 233-237 (DTAGL), and 298-301 (NKWD). Positions 354 to 438 (AKLPTPKLTR…PLRIEFRSSN (85 aa)) constitute a KH-like domain.

The protein belongs to the TRAFAC class TrmE-Era-EngA-EngB-Septin-like GTPase superfamily. EngA (Der) GTPase family. Associates with the 50S ribosomal subunit.

Its function is as follows. GTPase that plays an essential role in the late steps of ribosome biogenesis. The sequence is that of GTPase Der from Burkholderia ambifaria (strain MC40-6).